Here is a 503-residue protein sequence, read N- to C-terminus: uncharacterized protein (503 aa).

The helical transmembrane segment at 26–46 threads the bilayer; sequence ILFLLLGLIILVNISINVATA. Disordered stretches follow at residues 155 to 176, 311 to 381, 436 to 456, and 472 to 503; these read RPLS…MSQM, YDAR…ESHE, QISD…NPGG, and VQEN…GKLN. Composition is skewed to basic and acidic residues over residues 311-322 and 334-346; these read YDARDQWRRGTE and NPRE…DHNS. The segment covering 348 to 367 has biased composition (polar residues); the sequence is AHRQNFSSHTHSQPNHSPPQ. A compositionally biased stretch (basic residues) spans 493 to 503; the sequence is SLHRSRTGKLN.

It localises to the membrane. This is an uncharacterized protein from Mus musculus (Mouse).